A 1719-amino-acid chain; its full sequence is Sodium channel protein type 4 subunit alpha B (1719 aa).

Topologically, residues 1 to 126 (MRTLLPPVGS…IVAIKILIHS (126 aa)) are cytoplasmic. The tract at residues 28–50 (QQIREEERKRTNAQVSEELPEPA) is disordered. One copy of the I repeat lies at 108 to 431 (LLSPFNALRI…VVAMAYAEQN (324 aa)). The chain crosses the membrane as a helical span at residues 127-145 (LFSLFIMATILTNCAFMTL). Residues 146–152 (SDPPAWS) are Extracellular-facing. The chain crosses the membrane as a helical span at residues 153 to 173 (KTMEYVFTFIYTFEATIKILS). Over 174–187 (RGFCVGKFTFLKDP) the chain is Cytoplasmic. A helical membrane pass occupies residues 188 to 205 (WNWLDFMVISMAYLTELV). The Extracellular segment spans residues 206–211 (DLGNVS). N-linked (GlcNAc...) asparagine glycosylation is present at asparagine 209. Residues 212–228 (VLRTFRVLRALKTITVI) traverse the membrane as a helical segment. The Cytoplasmic portion of the chain corresponds to 229-247 (PGLKTIVGALIQSVRKLAD). The chain crosses the membrane as a helical span at residues 248 to 267 (AMVLTVFCLSVFALIGLQLF). Residues 268–368 (MGNLRQKCVL…PNYGYTSYDS (101 aa)) are Extracellular-facing. Cysteine 275 and cysteine 337 are oxidised to a cystine. 2 N-linked (GlcNAc...) asparagine glycosylation sites follow: asparagine 285 and asparagine 339. Cysteine 346 and cysteine 352 are disulfide-bonded. An intramembrane region (pore-forming) is located at residues 369-393 (FGWAFLALFRLMTQDFWENLFQLTL). Over 394-400 (RTAGKTY) the chain is Extracellular. Residues 401–421 (MIFFVVVIFLGSFYLINLILA) form a helical membrane-spanning segment. Residues 422–513 (VVAMAYAEQN…ECLYAIVMDP (92 aa)) lie on the Cytoplasmic side of the membrane. An II repeat occupies 495–766 (CCGCWRHLKE…QIAINRINRA (272 aa)). The helical transmembrane segment at 514-532 (FVDLGITICIILNTVFMAM) threads the bilayer. Over 533–543 (EHYPMSADFEE) the chain is Extracellular. A helical membrane pass occupies residues 544–563 (LLSVGNLVFTGIFTGEMVFK). Residues 564–577 (ILAMDPYFYFQVGW) lie on the Cytoplasmic side of the membrane. Residues 578-597 (NIFDSIIVTISLVELGLANV) form a helical membrane-spanning segment. At 598-599 (QG) the chain is on the extracellular side. The helical transmembrane segment at 600-617 (LSVLRSFRLMRVFKLAKS) threads the bilayer. The Cytoplasmic portion of the chain corresponds to 618–633 (WPTLNMLIKIIGNSVG). Residues 634 to 652 (ALGNLTLVLAIIVFIFAVV) form a helical membrane-spanning segment. Over 653-681 (GMQLFGKNYKDCVCRISEDCVLPRWHMND) the chain is Extracellular. Residues cysteine 666 and cysteine 672 are joined by a disulfide bond. Residues 682–702 (FFHAFLIIFRVLCGEWIESMW) constitute an intramembrane region (pore-forming). At 703-713 (DCMEVSGQTMC) the chain is on the extracellular side. A disulfide bridge links cysteine 704 with cysteine 713. A helical transmembrane segment spans residues 714–732 (LIVFMMVLVIGNLVVLNLF). Topologically, residues 733–919 (LALLLSSFSG…TCFSIVENNY (187 aa)) are cytoplasmic. Residues 834-845 (SDSDDSDYDEDK) are compositionally biased toward acidic residues. A disordered region spans residues 834 to 862 (SDSDDSDYDEDKDSQCDESSVCSSVQKPE). Residues 900–1215 (RGKIWCNIRR…KKYYNAMKKL (316 aa)) form an III repeat. The helical transmembrane segment at 920–937 (FESFIVFMILLSSGALAF) threads the bilayer. Residues 938-950 (EDIYLEKHQLIKS) lie on the Extracellular side of the membrane. The helical transmembrane segment at 951-969 (ILEYADKVFTYVFVMEMVL) threads the bilayer. Topologically, residues 970 to 983 (KWFAYGFKSYFSNA) are cytoplasmic. A helical transmembrane segment spans residues 984-1002 (WCWLDFLIVDVSLVSLTAN). The Extracellular portion of the chain corresponds to 1003–1010 (ILGYSELG). The chain crosses the membrane as a helical span at residues 1011 to 1029 (AIKSLRTLRALRPLRALSR). The Cytoplasmic segment spans residues 1030 to 1046 (FEGMRVVVNALVGAVPS). The chain crosses the membrane as a helical span at residues 1047-1066 (IFNVLLVCLIFWLIFSIMGV). The Extracellular portion of the chain corresponds to 1067-1119 (NLFAGKFSYCFNETSQEIIDTKVVDNKTECIALIKANFTEVRWKNVKVNYDNV). Cysteine 1076 and cysteine 1096 form a disulfide bridge. 2 N-linked (GlcNAc...) asparagine glycosylation sites follow: asparagine 1078 and asparagine 1092. Positions 1120–1141 (GIGYLSLLQVATFKGWTDIMYA) form an intramembrane region, pore-forming. Topologically, residues 1142-1158 (AVDSRDVESQPIYEVNL) are extracellular. A helical transmembrane segment spans residues 1159–1180 (YMYLYFVIFIIFGSFFTLNLFI). Over 1181–1243 (GVIIDNFNQQ…LVFDLVTKQI (63 aa)) the chain is Cytoplasmic. Residues 1199–1201 (IFM) form an important for rapid channel inactivation region. The stretch at 1224-1521 (VPRPENPFQG…WEKFDPDASQ (298 aa)) is one IV repeat. A helical membrane pass occupies residues 1244 to 1261 (FDVFIMVLICLNMVTMMV). Topologically, residues 1262–1272 (ETDEQSDKKEE) are extracellular. The chain crosses the membrane as a helical span at residues 1273–1291 (VLYWINVVFILIFTTECTL). Residues 1292-1303 (KIIALRRHYFSI) are Cytoplasmic-facing. A helical transmembrane segment spans residues 1304–1321 (GWNIFDFVVVILSILGLL). Residues 1322-1334 (LADIIEKYFVSPT) lie on the Extracellular side of the membrane. A helical transmembrane segment spans residues 1335–1351 (LFRVIRLARIGRVLRLI). Over 1352-1370 (RGAKGIRTLLFALMMSLPA) the chain is Cytoplasmic. Residues 1371-1388 (LFNIGLLLFLIMFIFSIF) form a helical membrane-spanning segment. Residues 1389–1410 (GMSNFAYVKKEALIDDMFNFET) are Extracellular-facing. The segment at residues 1411-1433 (FGNSMICLFMITTSAGWDGLLSP) is an intramembrane region (pore-forming). Residues 1434 to 1462 (IMNTPPDCDPNVENPGTTVRGNCGSPAIG) lie on the Extracellular side of the membrane. Cysteine 1441 and cysteine 1456 are oxidised to a cystine. A helical transmembrane segment spans residues 1463–1485 (IAFFSTYIIMSFLVVVNMFIAII). Residues 1486-1719 (LENFNVATEE…QERDQRETSV (234 aa)) lie on the Cytoplasmic side of the membrane. An IQ domain is found at 1615 to 1644 (EEVAATVIQRAYRKYLLLRTVRLASFMYRE).

This sequence belongs to the sodium channel (TC 1.A.1.10) family. Nav1.4/SCN4A subfamily. In terms of assembly, voltage-gated sodium (Nav) channels consist of an ion-conducting alpha subunit which is functional on its own associated with regulatory beta subunits.

Its subcellular location is the cell membrane. The catalysed reaction is Na(+)(in) = Na(+)(out). Pore-forming subunit of a voltage-gated sodium (Nav) channel that directly mediates the depolarizing phase of action potentials in excitable membranes. Navs, also called VGSCs (voltage-gated sodium channels) or VDSCs (voltage-dependent sodium channels), operate by switching between closed and open conformations depending on the voltage difference across the membrane. In the open conformation they allow Na(+) ions to selectively pass through the pore, along their electrochemical gradient. The influx of Na+ ions provokes membrane depolarization, initiating the propagation of electrical signals throughout cells and tissues. This chain is Sodium channel protein type 4 subunit alpha B (scn4ab), found in Takifugu rubripes (Japanese pufferfish).